The chain runs to 124 residues: Late histone H2A.2.1 (124 aa).

Residues 1 to 18 show a composition bias toward basic residues; it reads MSGRGKGAKAKSKAKSRS. The interval 1 to 21 is disordered; the sequence is MSGRGKGAKAKSKAKSRSSRA. Position 2 is an N-acetylserine (S2). At S2 the chain carries Phosphoserine. An N5-methylglutamine modification is found at Q104. Residue K119 forms a Glycyl lysine isopeptide (Lys-Gly) (interchain with G-Cter in ubiquitin) linkage.

It belongs to the histone H2A family. As to quaternary structure, the nucleosome is a histone octamer containing two molecules each of H2A, H2B, H3 and H4 assembled in one H3-H4 heterotetramer and two H2A-H2B heterodimers. The octamer wraps approximately 147 bp of DNA. Monoubiquitination of Lys-119 gives a specific tag for epigenetic transcriptional repression. Post-translationally, phosphorylation of Ser-2 directly represses transcription.

It is found in the nucleus. The protein localises to the chromosome. Core component of nucleosome. Nucleosomes wrap and compact DNA into chromatin, limiting DNA accessibility to the cellular machineries which require DNA as a template. Histones thereby play a central role in transcription regulation, DNA repair, DNA replication and chromosomal stability. DNA accessibility is regulated via a complex set of post-translational modifications of histones, also called histone code, and nucleosome remodeling. The protein is Late histone H2A.2.1 of Psammechinus miliaris (Green sea urchin).